A 235-amino-acid polypeptide reads, in one-letter code: ATP-dependent Clp protease proteolytic subunit (235 aa).

Ser123 (nucleophile) is an active-site residue. Residue His148 is part of the active site.

Belongs to the peptidase S14 family. Fourteen ClpP subunits assemble into 2 heptameric rings which stack back to back to give a disk-like structure with a central cavity, resembling the structure of eukaryotic proteasomes.

It is found in the cytoplasm. The enzyme catalyses Hydrolysis of proteins to small peptides in the presence of ATP and magnesium. alpha-casein is the usual test substrate. In the absence of ATP, only oligopeptides shorter than five residues are hydrolyzed (such as succinyl-Leu-Tyr-|-NHMec, and Leu-Tyr-Leu-|-Tyr-Trp, in which cleavage of the -Tyr-|-Leu- and -Tyr-|-Trp bonds also occurs).. Functionally, cleaves peptides in various proteins in a process that requires ATP hydrolysis. Has a chymotrypsin-like activity. Plays a major role in the degradation of misfolded proteins. The chain is ATP-dependent Clp protease proteolytic subunit from Novosphingobium aromaticivorans (strain ATCC 700278 / DSM 12444 / CCUG 56034 / CIP 105152 / NBRC 16084 / F199).